Here is an 866-residue protein sequence, read N- to C-terminus: Probable beta-glucosidase F (866 aa).

The signal sequence occupies residues 1-20 (MAAFPAYLALLSYLVPGALS). N-linked (GlcNAc...) asparagine glycosylation is found at N65, N73, and N257. D285 is a catalytic residue. N328, N360, N395, N421, N474, N659, N664, and N724 each carry an N-linked (GlcNAc...) asparagine glycan. Residues 725 to 748 (SSKTYPYPDGYTTEPKPAPRAGGA) are disordered.

The protein belongs to the glycosyl hydrolase 3 family.

The protein localises to the secreted. The enzyme catalyses Hydrolysis of terminal, non-reducing beta-D-glucosyl residues with release of beta-D-glucose.. The protein operates within glycan metabolism; cellulose degradation. In terms of biological role, beta-glucosidases are one of a number of cellulolytic enzymes involved in the degradation of cellulosic biomass. Catalyzes the last step releasing glucose from the inhibitory cellobiose. This Aspergillus oryzae (strain ATCC 42149 / RIB 40) (Yellow koji mold) protein is Probable beta-glucosidase F (bglF).